Consider the following 153-residue polypeptide: Large ribosomal subunit protein uL15 (153 aa).

Residues 1 to 42 are disordered; the sequence is MRLNTIKPGMGSTKPRRRVGRGIGSGLGKTCGRGHKGQKSRA. Residues 21–31 are compositionally biased toward gly residues; the sequence is RGIGSGLGKTC.

It belongs to the universal ribosomal protein uL15 family. As to quaternary structure, part of the 50S ribosomal subunit.

Functionally, binds to the 23S rRNA. The polypeptide is Large ribosomal subunit protein uL15 (Nitrosomonas eutropha (strain DSM 101675 / C91 / Nm57)).